The sequence spans 188 residues: MGLLILGLGNPGLEFSLTRHNVGFSLLDKIVSKNGLFLKRKKKYEYSELRVISRRVILVKPLTYMNLSGSLFPSIFSDFYMCIKNLLVVLDNVDLPLGKCRLKERGGMSTHNGLKSISSVLGSSNYSRLYIGVGSNVMRDIKSFVLSRFCKDEIDRLEKLYDFLSDELIDISESNFKDKVQKINSSNF.

Residue F15 participates in tRNA binding. H20 acts as the Proton acceptor in catalysis. Positions 64, 66, and 112 each coordinate tRNA.

This sequence belongs to the PTH family. In terms of assembly, monomer.

It localises to the cytoplasm. It catalyses the reaction an N-acyl-L-alpha-aminoacyl-tRNA + H2O = an N-acyl-L-amino acid + a tRNA + H(+). In terms of biological role, hydrolyzes ribosome-free peptidyl-tRNAs (with 1 or more amino acids incorporated), which drop off the ribosome during protein synthesis, or as a result of ribosome stalling. Functionally, catalyzes the release of premature peptidyl moieties from peptidyl-tRNA molecules trapped in stalled 50S ribosomal subunits, and thus maintains levels of free tRNAs and 50S ribosomes. This is Peptidyl-tRNA hydrolase from Borreliella afzelii (strain PKo) (Borrelia afzelii).